Consider the following 437-residue polypeptide: Perilipin-2 (437 aa).

At Ala-2 the chain carries N-acetylalanine. Ser-215 is modified (phosphoserine). Tyr-232 is subject to Phosphotyrosine. The segment at 412–437 (SQNAQDQGAEMDKSSQETQRSEHKTH) is disordered. Residues 421–437 (EMDKSSQETQRSEHKTH) are compositionally biased toward basic and acidic residues.

Belongs to the perilipin family. Interacts with IRGC. Acylated; primarily with C14, C16 and C18 fatty acids. Post-translationally, phosphorylation at Tyr-232 by isoform 1 of CHKA (CHKalpha2) promotes dissociation from lipid droplets: dissociation is followed by recruitment of autophagosome machinery to lipid droplets and subsequent lipid droplet lipolysis. In terms of processing, polyubiquitination of Nt-acetylatable A-PLIN2 by MARCHF6 lead to degradation by 26S proteasomes. In terms of tissue distribution, milk lipid globules.

Its subcellular location is the membrane. The protein localises to the lipid droplet. Its function is as follows. Structural component of lipid droplets, which is required for the formation and maintenance of lipid storage droplets. This is Perilipin-2 from Homo sapiens (Human).